A 263-amino-acid chain; its full sequence is HTH-type transcriptional repressor NanR (263 aa).

The region spanning 30-98 is the HTH gntR-type domain; sequence KKLSEMVEEE…NGERARVSRP (69 aa). The H-T-H motif DNA-binding region spans 58 to 77; the sequence is ERELMAFFNVGRPSVREALA.

The protein belongs to the NanR family.

In terms of biological role, transcriptional repressor that controls expression of the genes required for the catabolism of sialic acids. The protein is HTH-type transcriptional repressor NanR of Salmonella arizonae (strain ATCC BAA-731 / CDC346-86 / RSK2980).